Reading from the N-terminus, the 545-residue chain is Glucose-6-phosphate isomerase (545 aa).

E349 acts as the Proton donor in catalysis. Catalysis depends on residues H380 and K509.

Belongs to the GPI family.

The protein localises to the cytoplasm. The catalysed reaction is alpha-D-glucose 6-phosphate = beta-D-fructose 6-phosphate. The protein operates within carbohydrate biosynthesis; gluconeogenesis. It participates in carbohydrate degradation; glycolysis; D-glyceraldehyde 3-phosphate and glycerone phosphate from D-glucose: step 2/4. Functionally, catalyzes the reversible isomerization of glucose-6-phosphate to fructose-6-phosphate. The sequence is that of Glucose-6-phosphate isomerase from Chelativorans sp. (strain BNC1).